A 351-amino-acid chain; its full sequence is ABC transporter nucleoside-binding protein BmpA (351 aa).

Residues 1-21 form the signal peptide; it reads MKKRVIAVSAIALASVAVLAG. A lipid anchor (N-palmitoyl cysteine) is attached at Cys-22. A lipid anchor (S-diacylglycerol cysteine) is attached at Cys-22.

It belongs to the BMP lipoprotein family. In terms of assembly, the complex is composed of two ATP-binding proteins (NupA), two transmembrane proteins (NupB and NupC) and a solute-binding protein (BmpA).

The protein resides in the cell membrane. Its function is as follows. Part of an ABC transporter complex involved in the uptake of all common nucleosides. This chain is ABC transporter nucleoside-binding protein BmpA, found in Lactococcus lactis subsp. cremoris (strain MG1363).